The sequence spans 241 residues: 1-(5-phosphoribosyl)-5-[(5-phosphoribosylamino)methylideneamino] imidazole-4-carboxamide isomerase (241 aa).

The active-site Proton acceptor is D8. The active-site Proton donor is D127.

The protein belongs to the HisA/HisF family.

It localises to the cytoplasm. The enzyme catalyses 1-(5-phospho-beta-D-ribosyl)-5-[(5-phospho-beta-D-ribosylamino)methylideneamino]imidazole-4-carboxamide = 5-[(5-phospho-1-deoxy-D-ribulos-1-ylimino)methylamino]-1-(5-phospho-beta-D-ribosyl)imidazole-4-carboxamide. It participates in amino-acid biosynthesis; L-histidine biosynthesis; L-histidine from 5-phospho-alpha-D-ribose 1-diphosphate: step 4/9. The protein is 1-(5-phosphoribosyl)-5-[(5-phosphoribosylamino)methylideneamino] imidazole-4-carboxamide isomerase of Thermotoga petrophila (strain ATCC BAA-488 / DSM 13995 / JCM 10881 / RKU-1).